Reading from the N-terminus, the 2147-residue chain is Large tegument protein deneddylase (2147 aa).

The tract at residues 1–233 (MKIVRASRDQ…PDIDASVMSG (233 aa)) is deubiquitination activity. Residues 3-223 (IVRASRDQSA…LVQIMDQYKD (221 aa)) enclose the Peptidase C76 domain. Catalysis depends on residues Cys-23, Asp-156, and His-158. Disordered regions lie at residues 228 to 301 (ASVM…RSRR), 1419 to 1438 (EIGQHKKDPPSTGEEVGLPE), 1567 to 1589 (SSSSGGGNGSGASSRQKDQQNAT), and 2034 to 2072 (RDPPRLKRASGDSSSSVPAEDRDPDARPQDSVPDQSLSE). Residues 240–261 (SISSSAASASASVSPLPSGAAS) are compositionally biased toward low complexity. Thr-292 is a region of interest (interaction with inner tegument protein). The span at 2052–2061 (AEDRDPDARP) shows a compositional bias: basic and acidic residues.

It belongs to the herpesviridae large tegument protein family. As to quaternary structure, interacts with host CUL1 and CUL4A; these interactions inhibit the E3 ligase activity of cullins. Interacts with inner tegument protein. Interacts with capsid vertex specific component CVC2. Interacts with the major capsid protein/MCP.

The protein resides in the virion tegument. The protein localises to the host cytoplasm. It is found in the host nucleus. The catalysed reaction is Thiol-dependent hydrolysis of ester, thioester, amide, peptide and isopeptide bonds formed by the C-terminal Gly of ubiquitin (a 76-residue protein attached to proteins as an intracellular targeting signal).. In terms of biological role, large tegument protein that plays multiple roles in the viral cycle. During viral entry, remains associated with the capsid while most of the tegument is detached and participates in the capsid transport toward the host nucleus. Plays a role in the routing of the capsid at the nuclear pore complex and subsequent uncoating. Within the host nucleus, acts as a deneddylase and promotes the degradation of nuclear CRLs (cullin-RING ubiquitin ligases) and thereby stabilizes nuclear CRL substrates, while cytoplasmic CRLs remain unaffected. These modifications prevent host cell cycle S-phase progression and create a favorable environment allowing efficient viral genome replication. Participates later in the secondary envelopment of capsids. Indeed, plays a linker role for the association of the outer viral tegument to the capsids together with the inner tegument protein. The sequence is that of Large tegument protein deneddylase (M48) from Mus musculus (Mouse).